The sequence spans 330 residues: GMP reductase (330 aa).

The active-site Thioimidate intermediate is the Cys-180. 209–232 (LIADGGIRHNGDIAKSVRFGASMV) is an NADP(+) binding site.

It belongs to the IMPDH/GMPR family. GuaC type 2 subfamily.

It catalyses the reaction IMP + NH4(+) + NADP(+) = GMP + NADPH + 2 H(+). Its function is as follows. Catalyzes the irreversible NADPH-dependent deamination of GMP to IMP. It functions in the conversion of nucleobase, nucleoside and nucleotide derivatives of G to A nucleotides, and in maintaining the intracellular balance of A and G nucleotides. This Lactobacillus acidophilus (strain ATCC 700396 / NCK56 / N2 / NCFM) protein is GMP reductase.